The following is a 335-amino-acid chain: Anthranilate phosphoribosyltransferase (335 aa).

5-phospho-alpha-D-ribose 1-diphosphate is bound by residues Gly-80, 83-84 (GD), Thr-88, 90-93 (NIST), 108-116 (KHGNRAVSS), and Ser-120. Gly-80 contacts anthranilate. Ser-92 contributes to the Mg(2+) binding site. Anthranilate is bound at residue Asn-111. Arg-166 provides a ligand contact to anthranilate. 2 residues coordinate Mg(2+): Asp-225 and Glu-226.

It belongs to the anthranilate phosphoribosyltransferase family. Homodimer. Mg(2+) is required as a cofactor.

The enzyme catalyses N-(5-phospho-beta-D-ribosyl)anthranilate + diphosphate = 5-phospho-alpha-D-ribose 1-diphosphate + anthranilate. It functions in the pathway amino-acid biosynthesis; L-tryptophan biosynthesis; L-tryptophan from chorismate: step 2/5. Catalyzes the transfer of the phosphoribosyl group of 5-phosphorylribose-1-pyrophosphate (PRPP) to anthranilate to yield N-(5'-phosphoribosyl)-anthranilate (PRA). The polypeptide is Anthranilate phosphoribosyltransferase (Clostridium kluyveri (strain NBRC 12016)).